A 158-amino-acid polypeptide reads, in one-letter code: C-type lectin mannose-binding isoform (158 aa).

Positions 1 to 23 (MGRFLLVTLSLLVGAFSLNEANS) are cleaved as a signal peptide. 4 disulfide bridges follow: Cys-26–Cys-37, Cys-54–Cys-154, Cys-61–Cys-156, and Cys-129–Cys-146. A C-type lectin domain is found at 33-155 (KNGFCYKVFN…CKALYSFICQ (123 aa)). Residues 119-121 (EPN) carry the Mannose-binding motif. The N-linked (GlcNAc...) asparagine glycan is linked to Asn-121. The Ca(2+) site is built by Glu-127, Asn-142, and Asp-143.

Belongs to the true venom lectin family. Dimer. Probably disulfide-linked homodimer. As to expression, expressed by the venom gland.

It localises to the secreted. Its function is as follows. Mannose-binding lectin that binds to and agglutinates rabbit (but not human) erythrocytes in a calcium-dependent manner. This chain is C-type lectin mannose-binding isoform, found in Oxyuranus scutellatus (Coastal taipan).